The sequence spans 146 residues: Hemoglobin subunit beta (146 aa).

One can recognise a Globin domain in the interval 2-146; that stretch reads HWTAEEKQLI…VAHALARKYH (145 aa). Residues H63 and H92 each coordinate heme b.

The protein belongs to the globin family. Heterotetramer of two alpha chains and two beta chains. As to expression, red blood cells.

In terms of biological role, involved in oxygen transport from the lung to the various peripheral tissues. In Ara ararauna (Blue-and-yellow macaw), this protein is Hemoglobin subunit beta (HBB).